Here is a 1167-residue protein sequence, read N- to C-terminus: Outer membrane protein SlpA (1167 aa).

Residues 1-22 (MKKSLIALTTALSFGLAAAQTA) form the signal peptide. Residues 23–254 (APVSAPQVPA…RIAALERNAF (232 aa)) lie on the Periplasmic side of the membrane. In terms of domain architecture, SLH spans 29 to 92 (QVPALTDVPA…DQMRDGETPA (64 aa)). Residues 255 to 268 (SVKPSLTIGYSVSR) form a beta stranded membrane-spanning segment. The Extracellular segment spans residues 269–377 (TSRNFDVDRL…RNGFGFNNLA (109 aa)). Residues D274, D276, R305, F308, D310, and E381 each coordinate Cu(2+). The chain crosses the membrane as a beta stranded span at residues 378–403 (RYKEGSTDIGISLGFDTSGQFSQVTS). Topologically, residues 404 to 416 (GTGGSLFSTAGRL) are periplasmic. The chain crosses the membrane as a beta stranded span at residues 417 to 428 (QVNQIDLNFGLV). At 429-471 (TGLPSDAYVDTNGNGKKDDGEATGRGTYLGSGGTAAILRDPAG) the chain is on the extracellular side. Residues D438, N442, K444, D446, and E449 each coordinate Fe(3+). The chain crosses the membrane as a beta stranded span at residues 472–490 (NVYRPVFFRFKNATTQFSV). At 491–494 (GNNP) the chain is on the periplasmic side. Residues 495 to 500 (VIVTLG) traverse the membrane as a beta stranded segment. The Extracellular portion of the chain corresponds to 501–519 (QQQKFYFSDYVFDNNYDGR). The Cu(2+) site is built by D513 and N515. A beta stranded membrane pass occupies residues 520 to 528 (GDGFTVTVD). The Periplasmic portion of the chain corresponds to 529–540 (GSNVPVIGAWKP). A beta stranded transmembrane segment spans residues 541–549 (QIKGVYGSR). 4 residues coordinate Cu(2+): R549, G551, D553, and G559. At 550 to 561 (SGLDGTAEAGYG) the chain is on the extracellular side. Residues 562–571 (VYYRGVRAQI) form a beta stranded membrane-spanning segment. The Periplasmic segment spans residues 572-577 (TPVGTL). Residues 578 to 588 (TAGIHYAQEGR) form a beta stranded membrane-spanning segment. Residues 589–601 (DMFGAAQNTTSTP) are Extracellular-facing. A beta stranded membrane pass occupies residues 602–615 (SDVTTYGADLHGKA). Over 616 to 617 (FG) the chain is Periplasmic. A beta stranded membrane pass occupies residues 618–630 (VELHSEYATSRVR). Deinoxanthin is bound at residue S622. Topologically, residues 631 to 638 (PNTANAAV) are extracellular. The chain crosses the membrane as a beta stranded span at residues 639 to 649 (QTSNAFYARVA). Topologically, residues 650–670 (TRKDNLAFDLNTPAAKFGNDT) are periplasmic. The chain crosses the membrane as a beta stranded span at residues 671-682 (FGVSLYDLNYRK). Topologically, residues 683–753 (IDAGYNNVAG…GTVVATNTKI (71 aa)) are extracellular. Residue G716 participates in Cu(2+) binding. Residues 754 to 766 (GQMGFGVKAAANL) traverse the membrane as a beta stranded segment. The Periplasmic segment spans residues 767–768 (GP). Residues 769–779 (VAIGGYYDTST) traverse the membrane as a beta stranded segment. Residues 780-788 (GANGDNANR) are Extracellular-facing. The beta stranded transmembrane segment at 789 to 798 (MTEAGGSAKV) threads the bilayer. The Periplasmic portion of the chain corresponds to 799-802 (AYSI). Residues 803–814 (FSLRGTYNTLDS) traverse the membrane as a beta stranded segment. The Extracellular portion of the chain corresponds to 815-831 (NRPQIYRDAAGTQIIGD). Residues 832–843 (AKVRRYAVQADV) form a beta stranded membrane-spanning segment. The Periplasmic portion of the chain corresponds to 844–848 (TPGLG). The chain crosses the membrane as a beta stranded span at residues 849 to 860 (LFVGAYYRDVNV). The Extracellular portion of the chain corresponds to 861–931 (NGVRSTTDRG…DQSRTATCFT (71 aa)). The beta stranded transmembrane segment at 932–940 (SYGVEAGHA) threads the bilayer. Residues 941–949 (GDNANALVK) are Periplasmic-facing. A beta stranded transmembrane segment spans residues 950 to 960 (DLFFRVGYSRV). At 961–976 (YVPTTATATTGDFSGS) the chain is on the extracellular side. A beta stranded membrane pass occupies residues 977–988 (VTYGDARYDRKV). Residues 989–990 (GV) lie on the Periplasmic side of the membrane. A beta stranded membrane pass occupies residues 991-1002 (ANVRLAGSFSTT). Residues 1003–1014 (NTQLDSRPAGTR) lie on the Extracellular side of the membrane. The chain crosses the membrane as a beta stranded span at residues 1015 to 1023 (GAVGLIVRT). Topologically, residues 1024–1032 (DPLENVPFR) are periplasmic. The beta stranded transmembrane segment at 1033–1046 (PQFNGQVGYYTADN) threads the bilayer. Residues 1047–1052 (RVAAGN) are Extracellular-facing. Residues 1053–1066 (YNANATKYGAGVVL) traverse the membrane as a beta stranded segment. Topologically, residues 1067-1073 (NDFLLPQ) are periplasmic. The beta stranded transmembrane segment at 1074-1086 (TKIGVRYDGYMAQ) threads the bilayer. The Extracellular segment spans residues 1087–1108 (NRQYTPFDGDGTQGYFSDANNN). Residues 1109 to 1122 (RRTNLNGVYVEGAY) traverse the membrane as a beta stranded segment. Residues 1123 to 1124 (QD) are Periplasmic-facing. Residues 1125–1138 (LIFSYGTYTLSQKD) traverse the membrane as a beta stranded segment. Residues 1139-1153 (LNGVEYGSGINNGQP) lie on the Extracellular side of the membrane. The chain crosses the membrane as a beta stranded span at residues 1154 to 1166 (ARGQTFKISYKVN). F1167 is a topological domain (periplasmic).

Homotrimer. Part of a heterooligomeric complex resulting in the main assembly named S-layer deinoxanthin-binding complex (SDBC) which is composed of six different subunits, namely SlpA, DR_2310, DR_0505, DR_A0283, DR_A0282, and DR_A0281.

It localises to the cell envelope. The protein localises to the cell outer membrane. The enzyme catalyses L-arginine(in) = L-arginine(out). The catalysed reaction is L-lysine(in) = L-lysine(out). It carries out the reaction L-glutamate(out) = L-glutamate(in). Plays an important role in the structural organization and integrity of the cell envelope, bridging the outer membrane to the peptidoglyan layer. Is a highly abundant molecule in the D.radiodurans cell envelope but is not a fundamental component of the S-layer. Binds the carotenoid deinoxanthin, a strong protective antioxidant specific of this bacterium, and could be part of the first lane of defense against UV radiation, especially under desiccation. Appears to be a nonselective channel. Is able to transport charged amino acids such as Lys, Arg and Glu; the large dimension of the pore points toward the physiological importance of the SDBC complex in assisting and allowing the exchange of substances, including nutrients, with the surrounding environment. The protein is Outer membrane protein SlpA of Deinococcus radiodurans (strain ATCC 13939 / DSM 20539 / JCM 16871 / CCUG 27074 / LMG 4051 / NBRC 15346 / NCIMB 9279 / VKM B-1422 / R1).